Here is a 330-residue protein sequence, read N- to C-terminus: MKDKAYDITIIGGGPIGLFAAFYAGLRGVTVKIIESLSELGGQPAILYPEKMIYDIPAYPSLTGVELTENLIKQLSRFEDRTTICLKEEVLTFDKVKGGFSIRTNKAEHFSKAIIIACGNGAFAPRTLGLESEENFADHNLFYNVHQLDQFAGQKVVICGGGDSAVDWALALEDIAESVTVVHRRDAFRAHEHSVELLKASTVNLLTPYVPKALKGIGNLAEKLVIQKVKEDEVLELELDSLIVSFGFSTSNKNLKNWNLDYKRSSITVSPLFQTSQEGIFAIGDAAAYNGKVDLIATGFGEAPTAVNQAINYIYPDRDNRVVHSTSLID.

Residues Glu35, Gln43, Tyr48, Val90, Phe123, Asp285, and Thr326 each coordinate FAD.

This sequence belongs to the ferredoxin--NADP reductase type 2 family. As to quaternary structure, homodimer. FAD is required as a cofactor.

It carries out the reaction 2 reduced [2Fe-2S]-[ferredoxin] + NADP(+) + H(+) = 2 oxidized [2Fe-2S]-[ferredoxin] + NADPH. This Streptococcus pyogenes serotype M1 protein is Ferredoxin--NADP reductase.